Consider the following 1409-residue polypeptide: MKSLLADLFKQTLPNEDQFDAITIGLASPDKIRSWSYGEVKKPETINYRTFKPERDGLFCAKIFGPVKDYECLCGKYKRLKHRGVICEKCGVEVTLSKVRRERMAHIELASPTAHIWFLKSLPSRLGMVLDMTLRDIERVLYFEAFVVVEPGMTPLNRGQLLTEDDYLAKVEEYGDDFDALMGAEGIRGLLRTLDVKLEIEKLRGDLETTGSEAKIKKFSKRLKVLEAFMQSGIKPEWMILEVLPVLPPDLRPLVPLDGGRFATSDLNDLYRRVINRNNRLKRLLELKAPEIIVRNEKRMLQESVDSLLDNGRRGKAMTGANKRPLKSLADMIKGKGGRFRQNLLGKRVDYSGRSVIVVGPQLKLHQCGLPKLMALELFKPFIFNKLELMGLATTIKQAKKMVESQEPVVWDILEEVIREHPVMLNRAPTLHRLGIQAFEPVLIEGKAIQLHPLVCVAFNADFDGDQMAVHVPLSLEAQMEARTLMLASNNVLSPANGEPIIVPSQDIVLGLYYATREGVNVAGEGMAFSDVGELKRAYESKQLSLHARVSVRLKEVEVSAEGERRDKITRYNTTAGRAMLSEILPPGLPFSVLDKALKKKEISRLINASFRRCGLKETVVFADKLMQFGFRLATRAGISIAVKDMLVPRQKDVLIHAAEQEVKEIARQYTSGLVTDGERYNKVVDIWGRAGDQVAKAMMDQLGQEDVVNRHGDTVKQESFNSIYMMADSGARGSAAQIRQLAGMRGLMAKPDGSIIETPITTNFREGLNVLQYFISTHGARKGLADTALKTANSGYLTRRLVDVTQDLVVTEDDCGTRDGFVMKALIEGGEVIEPLRDRILGRVCAEDVVNPESQETVIEAGSLLGEDAVDLIESLGIDEVKVRTALTCETRYGLCGKCYGRDLGRGSQVNVGEAVGVIAAQSIGEPGTQLTMRTFHVGGAASRAAAASGVESKSAGTVRFAGNMRYVSNAKGEKIIIARSAEVVVADDMGRERERHKLPYGATLLVDDGAPVKAGVLLATWDPHTRPIVTEYSGTVKFENVEEGATVAKQIDEVTGLSTLVVIDGKRRTSGASSKGVRPQVKLLDERGEEVKIAGTDHSVAITFQVGSLITVKDGQEVSVGDILARIPQESAKTRDITGGLPRVAELFEARPPKDAGVLAEYTGTVSFGKDTKGKQRLVITEADGTAHEFLIPKDKHVMVHDGQVVNKGELIVDGPADPHDILRLQGIEALARYIIDEVQDVYRLQGVKINDKHIEVIVRQMLRRVVINDAGNSRFIREEQVERSEVLDENDRIEAEGKLPAQYQNVLLGITKASLSTDSFISAASFQETTRVLTEAAIMGKRDDLRGLKENVIVGRLIPAGTGMAYHRNRKAQNAGEDLGPEHAWAEMQEVVPEVPADVSQDVQAG.

Residues Cys-72, Cys-74, Cys-87, and Cys-90 each coordinate Zn(2+). 3 residues coordinate Mg(2+): Asp-462, Asp-464, and Asp-466. Positions 816, 890, 897, and 900 each coordinate Zn(2+).

Belongs to the RNA polymerase beta' chain family. In terms of assembly, the RNAP catalytic core consists of 2 alpha, 1 beta, 1 beta' and 1 omega subunit. When a sigma factor is associated with the core the holoenzyme is formed, which can initiate transcription. It depends on Mg(2+) as a cofactor. The cofactor is Zn(2+).

The catalysed reaction is RNA(n) + a ribonucleoside 5'-triphosphate = RNA(n+1) + diphosphate. In terms of biological role, DNA-dependent RNA polymerase catalyzes the transcription of DNA into RNA using the four ribonucleoside triphosphates as substrates. This chain is DNA-directed RNA polymerase subunit beta', found in Aromatoleum aromaticum (strain DSM 19018 / LMG 30748 / EbN1) (Azoarcus sp. (strain EbN1)).